Consider the following 301-residue polypeptide: MRIEGVIVATVTPFTKDGVNYESLRTLLSKIVSEGYQGVFPTSSTGEVTKLTFEERVKVMEVAKEVAGGRALVVAGTGTGDHLSTIEIARRYKDVGVDALLITPPYYIQYDWAAIYAFYKRVLDKVDMPTILYTIPLATGYNIPVEVFELVANEYSQVVGVKDSSGDFRYHLDLIHLLGKRLSVLQGLDLLFVPSLLMGAQGGVLAGPNFLGRITLEQYRLVKEGKIAEAVALHNKLMPLWRFMGGCGLVGKLGGKWPTLYKVATQIVRGIDMGPPREPLPPIDDKDRRELEKLLKDLGLI.

Active-site charge relay system residues include Ser-44 and Tyr-107. Residue Tyr-133 is the Proton donor of the active site. Lys-162 (schiff-base intermediate with substrate) is an active-site residue.

It belongs to the DapA family. In terms of assembly, homotetramer.

It localises to the cytoplasm. This is an uncharacterized protein from Pyrobaculum islandicum (strain DSM 4184 / JCM 9189 / GEO3).